Reading from the N-terminus, the 822-residue chain is Glycerol-3-phosphate acyltransferase (822 aa).

The HXXXXD motif motif lies at 306 to 311 (CHRSHM). The interval 803–822 (ASSSAEMEAESQAVEETTQE) is disordered.

It belongs to the GPAT/DAPAT family.

It is found in the cell inner membrane. The catalysed reaction is sn-glycerol 3-phosphate + an acyl-CoA = a 1-acyl-sn-glycero-3-phosphate + CoA. The protein operates within phospholipid metabolism; CDP-diacylglycerol biosynthesis; CDP-diacylglycerol from sn-glycerol 3-phosphate: step 1/3. The polypeptide is Glycerol-3-phosphate acyltransferase (Pectobacterium carotovorum subsp. carotovorum (strain PC1)).